The following is a 1058-amino-acid chain: Non-canonical non-ribosomal peptide synthetase FUB8 (1058 aa).

Residues 43–365 are adenylation (A) domain; it reads EISRDEPDRV…LASVVMHPDE (323 aa). The 78-residue stretch at 566 to 643 folds into the Carrier domain; the sequence is TTEDVVRSGI…QLSHSVWTHL (78 aa). Position 601 is an O-(pantetheine 4'-phosphoryl)serine (serine 601). A thioester reductase (TR) domain region spans residues 680–921; it reads LTGTTGEIGS…IPIDLLAEVI (242 aa).

It participates in mycotoxin biosynthesis. Non-canonical non-ribosomal peptide synthetase; part of the gene cluster that mediates the biosynthesis of fusaric acid, a mycotoxin with low to moderate toxicity to animals and humans, but with high phytotoxic properties. L-aspartate is suggested as fusaric acid amino acid precursor that is activated and further processed to O-acetyl-L-homoserine by cluster enzymes aspartate kinase FUB3 and homoserine O-acetyltransferase FUB5, as well as enzymes of the primary metabolism. The polyketide synthase (PKS) FUB1 generates the triketide trans-2-hexenal which is presumptively released by the hydrolase FUB4 and linked to the NRPS-bound amino acid precursor by NAD(P)-dependent dehydrogenase FUB6. FUB1, FUB4, and the non-canonical NRPS Fub8 may form an enzyme complex. Further processing of the NRPS-bound intermediate might be carried out by FUB6 and the sulfhydrylase FUB7, enabling a spontaneous electrocyclization to close the carbon backbone of fusaric acid. Dihydrofusaric acid is likely to be released via reduction by the thioester reductase (TR) domain of FUB8 whereupon the final oxidation to fusaric acid may (also) be performed by the FMN-dependent dehydrogenase FUB9. The chain is Non-canonical non-ribosomal peptide synthetase FUB8 from Gibberella moniliformis (strain M3125 / FGSC 7600) (Maize ear and stalk rot fungus).